Consider the following 138-residue polypeptide: Acidic phospholipase A2 Cvv-E6f (138 aa).

The N-terminal stretch at 1 to 16 (MRTLWIVAVLLLGVEG) is a signal peptide. 7 disulfide bridges follow: C42–C131, C44–C60, C59–C111, C65–C138, C66–C104, C73–C97, and C91–C102. Positions 43, 45, and 47 each coordinate Ca(2+). The active site involves H63. D64 contacts Ca(2+). D105 is a catalytic residue.

Requires Ca(2+) as cofactor. As to expression, expressed by the venom gland.

It is found in the secreted. It carries out the reaction a 1,2-diacyl-sn-glycero-3-phosphocholine + H2O = a 1-acyl-sn-glycero-3-phosphocholine + a fatty acid + H(+). Functionally, snake venom phospholipase A2 (PLA2) that shows very low inhibition of ADP-induced platelet aggregation in platelet-rich plasma of human, rabbit and guinea pig. In vivo, shows efficient edema-inducing activities in rat paws. PLA2 catalyzes the calcium-dependent hydrolysis of the 2-acyl groups in 3-sn-phosphoglycerides. The polypeptide is Acidic phospholipase A2 Cvv-E6f (Crotalus viridis viridis (Prairie rattlesnake)).